Reading from the N-terminus, the 170-residue chain is Tubulin polymerization-promoting protein family member 2 (170 aa).

Residues 105 to 117 (TTGVTKSTTVGGV) are compositionally biased toward low complexity. The disordered stretch occupies residues 105–170 (TTGVTKSTTV…GAGTYDKKNQ (66 aa)). Basic and acidic residues predominate over residues 129–149 (THKERFDESGKGKGIEGREET).

This sequence belongs to the TPPP family. As to expression, only expressed in male reproductive organs, including testis. Expressed in elongating spermatids at stages IV-VIII of the seminiferous epithelial cycle in testis and in mature sperm in the epididymis.

The protein resides in the cytoplasm. It localises to the cytosol. Its subcellular location is the cell projection. It is found in the cilium. The protein localises to the flagellum. Functionally, probable regulator of microtubule dynamics required for sperm motility. In contrast to other members of the family, has no microtubule bundling activity. The sequence is that of Tubulin polymerization-promoting protein family member 2 from Mus musculus (Mouse).